A 267-amino-acid chain; its full sequence is Hydroxyethylthiazole kinase 2 (267 aa).

Met41 contributes to the substrate binding site. Lys116 and Thr166 together coordinate ATP. Substrate is bound at residue Gly193.

The protein belongs to the Thz kinase family. It depends on Mg(2+) as a cofactor.

The catalysed reaction is 5-(2-hydroxyethyl)-4-methylthiazole + ATP = 4-methyl-5-(2-phosphooxyethyl)-thiazole + ADP + H(+). It functions in the pathway cofactor biosynthesis; thiamine diphosphate biosynthesis; 4-methyl-5-(2-phosphoethyl)-thiazole from 5-(2-hydroxyethyl)-4-methylthiazole: step 1/1. Its function is as follows. Catalyzes the phosphorylation of the hydroxyl group of 4-methyl-5-beta-hydroxyethylthiazole (THZ). The sequence is that of Hydroxyethylthiazole kinase 2 from Streptococcus pneumoniae (strain Taiwan19F-14).